A 539-amino-acid chain; its full sequence is Squalene monooxygenase SE1 (539 aa).

2 helical membrane-spanning segments follow: residues 22–42 and 71–91; these read LLIDQYFLGWIFAFLFGFLLL and IAGSTDVIIVGAGVAGSALAY. Residues 84–85, 104–105, arginine 112, arginine 183, valine 199, aspartate 361, and methionine 374 contribute to the FAD site; these read VA and ER. The helical transmembrane segment at 472-492 threads the bilayer; the sequence is LFLHFFAVAIYGVGRLLIPFP.

Belongs to the squalene monooxygenase family. FAD serves as cofactor. In terms of tissue distribution, mostly expressed in flower buds and leaves, and, to a lower extent, at high levels thought, in roots and petioles. In petioles, preferentially observed in vascular bundle tissue (phloem cells and parenchymatous cells near xylem) and resin ducts.

The protein resides in the microsome membrane. The protein localises to the endoplasmic reticulum membrane. The catalysed reaction is squalene + reduced [NADPH--hemoprotein reductase] + O2 = (S)-2,3-epoxysqualene + oxidized [NADPH--hemoprotein reductase] + H2O + H(+). The protein operates within terpene metabolism; lanosterol biosynthesis; lanosterol from farnesyl diphosphate: step 2/3. Component of the triterpene saponins (e.g. ginsenosides or panaxosides) and phytosterols biosynthetic pathways. Catalyzes the first oxygenation step in sterol biosynthesis and is suggested to be one of the rate-limiting enzymes in this pathway. The protein is Squalene monooxygenase SE1 of Panax ginseng (Korean ginseng).